Consider the following 316-residue polypeptide: N-acetylmuramic acid 6-phosphate etherase (316 aa).

Residues 1–24 are disordered; it reads MTRFQSDAAVSADRGHLMTEQPNP. The SIS domain occupies 66–229; it reads IASRLKDGGR…STAVMVRLGK (164 aa). E94 acts as the Proton donor in catalysis. Residue E125 is part of the active site.

Belongs to the GCKR-like family. MurNAc-6-P etherase subfamily. As to quaternary structure, homodimer.

The catalysed reaction is N-acetyl-D-muramate 6-phosphate + H2O = N-acetyl-D-glucosamine 6-phosphate + (R)-lactate. It functions in the pathway amino-sugar metabolism; N-acetylmuramate degradation. Functionally, specifically catalyzes the cleavage of the D-lactyl ether substituent of MurNAc 6-phosphate, producing GlcNAc 6-phosphate and D-lactate. In Parasynechococcus marenigrum (strain WH8102), this protein is N-acetylmuramic acid 6-phosphate etherase.